Here is a 193-residue protein sequence, read N- to C-terminus: Sporulation-specific transcriptional regulator GerR (193 aa).

One can recognise an HTH myb-type domain in the interval methionine 1–tyrosine 61. Residues phenylalanine 35–valine 57 constitute a DNA-binding region (H-T-H motif). Positions alanine 122 to methionine 177 form a coiled coil.

Belongs to the RsfA transcriptional regulator family.

Its function is as follows. Transcriptional factor that regulates the expression of several late sporulation genes. Controls genes of both sigma-E and sigma-K regulons, acting alone on some genes and in conjunction with SpoIIID or GerE on others. Regulates, directly or indirectly, the expression of genes encoding coat proteins such as cgeA, cotB, cotC, cotG, cotU and cotY. Controls late sporulation genes in two ways: directly, by binding to the promoter region of genes such as cotB, cotU and spoVIF, and acting directly on their transcription, and indirectly, through the activation of SpoVIF, which stabilizes the transcriptional activator GerE and consequently induces the expression of the GerE-dependent genes, such as cotC and cotG. Its effect is strongly positive on spoVIF, cotC, and cotG, weakly positive on cotB, and negative on cotU. The polypeptide is Sporulation-specific transcriptional regulator GerR (Bacillus subtilis (strain 168)).